The primary structure comprises 418 residues: Inner capsid protein sigma-2 (418 aa).

Belongs to the orthoreovirus sigma-1 protein family. Interacts with protein mu-NS; in viral inclusions.

The protein resides in the virion. Inner capsid (core) component. This chain is Inner capsid protein sigma-2 (S2), found in Reovirus type 3 (strain Dearing) (T3D).